The primary structure comprises 487 residues: Glutamyl-tRNA(Gln) amidotransferase subunit A (487 aa).

Active-site charge relay system residues include Lys79 and Ser158. Ser182 functions as the Acyl-ester intermediate in the catalytic mechanism.

This sequence belongs to the amidase family. GatA subfamily. Heterotrimer of A, B and C subunits.

It carries out the reaction L-glutamyl-tRNA(Gln) + L-glutamine + ATP + H2O = L-glutaminyl-tRNA(Gln) + L-glutamate + ADP + phosphate + H(+). Functionally, allows the formation of correctly charged Gln-tRNA(Gln) through the transamidation of misacylated Glu-tRNA(Gln) in organisms which lack glutaminyl-tRNA synthetase. The reaction takes place in the presence of glutamine and ATP through an activated gamma-phospho-Glu-tRNA(Gln). The chain is Glutamyl-tRNA(Gln) amidotransferase subunit A from Ehrlichia ruminantium (strain Welgevonden).